The chain runs to 63 residues: MRYLPVFVILLLLIASIPSDTVQLKTKDDMPLASFHGNGRRILRMLSNKRLCCVTEDWCCEWW.

An N-terminal signal peptide occupies residues 1–21 (MRYLPVFVILLLLIASIPSDT). Residues 22 to 50 (VQLKTKDDMPLASFHGNGRRILRMLSNKR) constitute a propeptide that is removed on maturation.

This sequence belongs to the conotoxin T superfamily. Contains 2 disulfide bonds that can be either 'C1-C3, C2-C4' or 'C1-C4, C2-C3', since these disulfide connectivities have been observed for conotoxins with cysteine framework V (for examples, see AC P0DQQ7 and AC P81755). In terms of tissue distribution, expressed by the venom duct.

It is found in the secreted. The protein is Conotoxin Gm5.1 of Conus gloriamaris (Glory-of-the-Sea cone).